Here is a 348-residue protein sequence, read N- to C-terminus: Heat-inducible transcription repressor HrcA (348 aa).

Belongs to the HrcA family.

In terms of biological role, negative regulator of class I heat shock genes (grpE-dnaK-dnaJ and groELS operons). Prevents heat-shock induction of these operons. The chain is Heat-inducible transcription repressor HrcA from Ruminiclostridium cellulolyticum (strain ATCC 35319 / DSM 5812 / JCM 6584 / H10) (Clostridium cellulolyticum).